Reading from the N-terminus, the 179-residue chain is Probable chorismate pyruvate-lyase (179 aa).

The substrate site is built by arginine 82, leucine 120, and glutamate 165.

Belongs to the UbiC family.

It is found in the cytoplasm. The enzyme catalyses chorismate = 4-hydroxybenzoate + pyruvate. It functions in the pathway cofactor biosynthesis; ubiquinone biosynthesis. Functionally, removes the pyruvyl group from chorismate, with concomitant aromatization of the ring, to provide 4-hydroxybenzoate (4HB) for the ubiquinone pathway. In Vibrio cholerae serotype O1 (strain ATCC 39315 / El Tor Inaba N16961), this protein is Probable chorismate pyruvate-lyase.